The primary structure comprises 497 residues: Probable cytosol aminopeptidase (497 aa).

Positions 263 and 268 each coordinate Mn(2+). K275 is a catalytic residue. Mn(2+) contacts are provided by D286, D345, and E347. The active site involves R349.

The protein belongs to the peptidase M17 family. Mn(2+) serves as cofactor.

The protein resides in the cytoplasm. It carries out the reaction Release of an N-terminal amino acid, Xaa-|-Yaa-, in which Xaa is preferably Leu, but may be other amino acids including Pro although not Arg or Lys, and Yaa may be Pro. Amino acid amides and methyl esters are also readily hydrolyzed, but rates on arylamides are exceedingly low.. It catalyses the reaction Release of an N-terminal amino acid, preferentially leucine, but not glutamic or aspartic acids.. Functionally, presumably involved in the processing and regular turnover of intracellular proteins. Catalyzes the removal of unsubstituted N-terminal amino acids from various peptides. The polypeptide is Probable cytosol aminopeptidase (Rhizobium meliloti (strain 1021) (Ensifer meliloti)).